The following is a 303-amino-acid chain: Elongation factor Ts (303 aa).

The segment at 82-85 (TDFV) is involved in Mg(2+) ion dislocation from EF-Tu.

This sequence belongs to the EF-Ts family.

It localises to the cytoplasm. Functionally, associates with the EF-Tu.GDP complex and induces the exchange of GDP to GTP. It remains bound to the aminoacyl-tRNA.EF-Tu.GTP complex up to the GTP hydrolysis stage on the ribosome. The sequence is that of Elongation factor Ts from Clostridioides difficile (strain 630) (Peptoclostridium difficile).